We begin with the raw amino-acid sequence, 262 residues long: Tritrans,polycis-undecaprenyl-diphosphate synthase (geranylgeranyl-diphosphate specific) (262 aa).

Asp-40 is an active-site residue. Asp-40 lines the Mg(2+) pocket. Residues 41 to 44 (GNRR), Trp-45, and 85 to 87 (STE) each bind substrate. Asn-88 acts as the Proton acceptor in catalysis. Substrate contacts are provided by residues Arg-92, Arg-211, and 217–219 (RIS). Residue Glu-230 coordinates Mg(2+).

The protein belongs to the UPP synthase family. In terms of assembly, homodimer. The cofactor is Mg(2+).

The enzyme catalyses geranylgeranyl diphosphate + 7 isopentenyl diphosphate = tri-trans,hepta-cis-undecaprenyl diphosphate + 7 diphosphate. Catalyzes the sequential condensation of isopentenyl diphosphate (IPP) with geranylgeranyl diphosphate (GGPP) to yield (2Z,6Z,10Z,14Z,18Z,22Z,26Z,30E,34E,38E)-undecaprenyl diphosphate (tritrans,heptacis-UPP). It is probably the precursor of glycosyl carrier lipids. The polypeptide is Tritrans,polycis-undecaprenyl-diphosphate synthase (geranylgeranyl-diphosphate specific) (Sulfurisphaera tokodaii (strain DSM 16993 / JCM 10545 / NBRC 100140 / 7) (Sulfolobus tokodaii)).